The sequence spans 528 residues: Folylpolyglutamate synthase (528 aa).

Residue 104 to 107 coordinates ATP; the sequence is GKGG. Residues serine 134, glutamate 208, and histidine 236 each coordinate Mg(2+). ATP contacts are provided by arginine 351 and aspartate 365.

It belongs to the folylpolyglutamate synthase family. It depends on a monovalent cation as a cofactor.

Its subcellular location is the mitochondrion inner membrane. It is found in the mitochondrion matrix. The protein resides in the cytoplasm. The enzyme catalyses (6S)-5,6,7,8-tetrahydrofolyl-(gamma-L-Glu)(n) + L-glutamate + ATP = (6S)-5,6,7,8-tetrahydrofolyl-(gamma-L-Glu)(n+1) + ADP + phosphate + H(+). It participates in cofactor biosynthesis; tetrahydrofolylpolyglutamate biosynthesis. In terms of biological role, catalyzes conversion of folates to polyglutamate derivatives allowing concentration of folate compounds in the cell and the intracellular retention of these cofactors, which are important substrates for most of the folate-dependent enzymes that are involved in one-carbon transfer reactions involved in purine, pyrimidine and amino acid synthesis. The protein is Folylpolyglutamate synthase (met-6) of Neurospora crassa (strain ATCC 24698 / 74-OR23-1A / CBS 708.71 / DSM 1257 / FGSC 987).